Reading from the N-terminus, the 246-residue chain is Large ribosomal subunit protein uL3 (246 aa).

N5-methylglutamine is present on Q151.

The protein belongs to the universal ribosomal protein uL3 family. In terms of assembly, part of the 50S ribosomal subunit. Forms a cluster with proteins L14 and L19. Post-translationally, methylated by PrmB.

One of the primary rRNA binding proteins, it binds directly near the 3'-end of the 23S rRNA, where it nucleates assembly of the 50S subunit. This is Large ribosomal subunit protein uL3 from Bartonella quintana (strain Toulouse) (Rochalimaea quintana).